The chain runs to 554 residues: Propanediol dehydratase large subunit (554 aa).

This sequence belongs to the diol/glycerol dehydratase large subunit family. In terms of assembly, the propanediol dehydratase enzyme is a heterotrimeric complex composed of a large (PduC), a medium (PduD) and a small (PduE) subunit. Requires adenosylcob(III)alamin as cofactor.

The protein resides in the bacterial microcompartment. The catalysed reaction is propane-1,2-diol = propanal + H2O. The protein operates within polyol metabolism; 1,2-propanediol degradation. With respect to regulation, inhibited by glycerol. Functionally, part of the PduCDE complex that catalyzes the dehydration of 1,2-propanediol (1,2-PD) to propionaldehyde. Required for S.typhimurium growth on 1,2-PD as the sole carbon and energy source. This subunit is directly targeted to the BMC. In terms of biological role, the 1,2-PD-specific bacterial microcompartment (BMC) concentrates low levels of 1,2-PD catabolic enzymes, concentrates volatile reaction intermediates thus enhancing pathway flux and keeps the level of toxic, mutagenic propionaldehyde low. The polypeptide is Propanediol dehydratase large subunit (Salmonella typhimurium (strain LT2 / SGSC1412 / ATCC 700720)).